Reading from the N-terminus, the 180-residue chain is Isopentenyl-diphosphate Delta-isomerase (180 aa).

Residues His22 and His28 each coordinate Mn(2+). In terms of domain architecture, Nudix hydrolase spans 26–160; it reads LKHKAVSVFA…PERFTPWLKI (135 aa). The active site involves Cys62. Cys62 serves as a coordination point for Mg(2+). Residue His64 coordinates Mn(2+). Glu82 contributes to the Mg(2+) binding site. Glu108 and Glu110 together coordinate Mn(2+). Residue Glu110 is part of the active site.

Belongs to the IPP isomerase type 1 family. It depends on Mg(2+) as a cofactor. Mn(2+) serves as cofactor.

Its subcellular location is the cytoplasm. The catalysed reaction is isopentenyl diphosphate = dimethylallyl diphosphate. The protein operates within isoprenoid biosynthesis; dimethylallyl diphosphate biosynthesis; dimethylallyl diphosphate from isopentenyl diphosphate: step 1/1. Catalyzes the 1,3-allylic rearrangement of the homoallylic substrate isopentenyl (IPP) to its highly electrophilic allylic isomer, dimethylallyl diphosphate (DMAPP). This is Isopentenyl-diphosphate Delta-isomerase from Ruegeria pomeroyi (strain ATCC 700808 / DSM 15171 / DSS-3) (Silicibacter pomeroyi).